The sequence spans 744 residues: Probable methylmalonyl-CoA mutase, mitochondrial (744 aa).

A B12-binding domain is found at 605 to 737; the sequence is QPRIMVAKMG…EKLEANLPEA (133 aa). His618 provides a ligand contact to adenosylcob(III)alamin.

The protein belongs to the methylmalonyl-CoA mutase family. As to quaternary structure, homodimer. The cofactor is adenosylcob(III)alamin.

The protein resides in the mitochondrion matrix. The catalysed reaction is (R)-methylmalonyl-CoA = succinyl-CoA. Involved, in man, in the degradation of several amino acids, odd-chain fatty acids and cholesterol via propionyl-CoA to the tricarboxylic acid cycle. MCM has different functions in other species. The protein is Probable methylmalonyl-CoA mutase, mitochondrial (mmcm-1) of Caenorhabditis elegans.